A 239-amino-acid chain; its full sequence is uncharacterized protein (239 aa).

A run of 8 helical transmembrane segments spans residues 4–24 (LIPK…LGMV), 29–49 (VIWH…VYPV), 61–81 (YQKW…ISVF), 84–104 (PPLI…MYFA), 116–136 (VAGV…GMGT), 139–159 (GWAW…SFYV), 180–200 (LLLP…AFIP), and 218–238 (IGIL…LFIT).

The protein to H.influenzae HI_1626.

It localises to the cell membrane. This is an uncharacterized protein from Bacillus subtilis (strain 168).